A 232-amino-acid polypeptide reads, in one-letter code: Demethylmenaquinone methyltransferase (232 aa).

S-adenosyl-L-methionine-binding positions include Thr58, Asp79, and 104–105 (NA).

Belongs to the class I-like SAM-binding methyltransferase superfamily. MenG/UbiE family.

It catalyses the reaction a 2-demethylmenaquinol + S-adenosyl-L-methionine = a menaquinol + S-adenosyl-L-homocysteine + H(+). The protein operates within quinol/quinone metabolism; menaquinone biosynthesis; menaquinol from 1,4-dihydroxy-2-naphthoate: step 2/2. Methyltransferase required for the conversion of demethylmenaquinol (DMKH2) to menaquinol (MKH2). In Bacillus licheniformis (strain ATCC 14580 / DSM 13 / JCM 2505 / CCUG 7422 / NBRC 12200 / NCIMB 9375 / NCTC 10341 / NRRL NRS-1264 / Gibson 46), this protein is Demethylmenaquinone methyltransferase.